The sequence spans 728 residues: 1,4-alpha-glucan branching enzyme GlgB (728 aa).

The Nucleophile role is filled by Asp-405. The Proton donor role is filled by Glu-458.

This sequence belongs to the glycosyl hydrolase 13 family. GlgB subfamily. Monomer.

The enzyme catalyses Transfers a segment of a (1-&gt;4)-alpha-D-glucan chain to a primary hydroxy group in a similar glucan chain.. It functions in the pathway glycan biosynthesis; glycogen biosynthesis. Its function is as follows. Catalyzes the formation of the alpha-1,6-glucosidic linkages in glycogen by scission of a 1,4-alpha-linked oligosaccharide from growing alpha-1,4-glucan chains and the subsequent attachment of the oligosaccharide to the alpha-1,6 position. This chain is 1,4-alpha-glucan branching enzyme GlgB, found in Salmonella paratyphi B (strain ATCC BAA-1250 / SPB7).